The following is a 533-amino-acid chain: Glucomannan 4-beta-mannosyltransferase 9 (533 aa).

Residues 37 to 57 (IVPALRLGVYICLTMSVMLFV) form a helical membrane-spanning segment. D136 is a catalytic residue. Residues D195 and D197 each coordinate substrate. Residue D289 is part of the active site. A run of 4 helical transmembrane segments spans residues 368-388 (LVAH…TVLV), 404-426 (VITL…WILF), 483-503 (VLEL…AFFG), and 510-530 (YLFA…GTIV).

It belongs to the glycosyltransferase 2 family. Plant cellulose synthase-like A subfamily. In terms of tissue distribution, expressed in cotyledons at the base of the hypocotyls, in root elongation zone, lateral root primordia, vascular system of young leaves, abscission zone of the pedicle,.

It localises to the golgi apparatus membrane. The enzyme catalyses GDP-mannose + (glucomannan)n = GDP + (glucomannan)n+1.. In terms of biological role, possesses glucomannan synthase and mannan synthase activities in vitro. Mannan synthase consists of a 4-beta-mannosyltransferase activity on mannan using GDP-mannose. The beta-1,4-mannan product is the backbone for galactomannan synthesis by galactomannan galactosyltransferase. Galactomannan is a noncellulosic polysaccharides of plant cell wall. Required for lateral root development. This Arabidopsis thaliana (Mouse-ear cress) protein is Glucomannan 4-beta-mannosyltransferase 9.